A 219-amino-acid chain; its full sequence is Ribose-5-phosphate isomerase A (219 aa).

Residues 28–31, 81–84, and 94–97 contribute to the substrate site; these read TGST, DGAD, and KGGG. The active-site Proton acceptor is the E103. K121 is a substrate binding site.

Belongs to the ribose 5-phosphate isomerase family. As to quaternary structure, homodimer.

The catalysed reaction is aldehydo-D-ribose 5-phosphate = D-ribulose 5-phosphate. It functions in the pathway carbohydrate degradation; pentose phosphate pathway; D-ribose 5-phosphate from D-ribulose 5-phosphate (non-oxidative stage): step 1/1. Its function is as follows. Catalyzes the reversible conversion of ribose-5-phosphate to ribulose 5-phosphate. In Pectobacterium atrosepticum (strain SCRI 1043 / ATCC BAA-672) (Erwinia carotovora subsp. atroseptica), this protein is Ribose-5-phosphate isomerase A.